A 112-amino-acid polypeptide reads, in one-letter code: Large ribosomal subunit protein eL33y (112 aa).

Belongs to the eukaryotic ribosomal protein eL33 family.

This Arabidopsis thaliana (Mouse-ear cress) protein is Large ribosomal subunit protein eL33y (RPL35AC).